A 632-amino-acid chain; its full sequence is CREB-regulated transcription coactivator 3 (632 aa).

Ser66 carries the post-translational modification Phosphoserine. Over residues 105-115 (NRLHSSHHRPV) the composition is skewed to basic residues. The disordered stretch occupies residues 105 to 156 (NRLHSSHHRPVEKHGRQCDSSPYGSVYLSPPPDNNWRRTNSDSALHTSASSS). Residue Ser133 is modified to Phosphoserine. Residue Ser145 is modified to Phosphoserine; by SIK2. The span at 145-156 (SDSALHTSASSS) shows a compositional bias: low complexity. Thr151 carries the post-translational modification Phosphothreonine. Position 293 is a phosphoserine (Ser293). Positions 310 to 338 (GIQNTCSNPSIQATMNNNVNNHTPPGRNN) are enriched in polar residues. The segment at 310–455 (GIQNTCSNPS…ESQNFQPPSP (146 aa)) is disordered. Residues 339-360 (PTLHPSLRLSSLSNPSLPTSAL) show a composition bias toward low complexity. 2 positions are modified to phosphoserine: Ser372 and Ser391. Over residues 372-405 (SPLTLTPGSESNRSISNQFSPTSPMDMLPNSQGV) the composition is skewed to polar residues. The segment covering 413 to 424 (SLPPLEPPPPYP) has biased composition (pro residues). Residues 425 to 440 (LYTDQPQPQLHHTQQQ) are compositionally biased toward low complexity. Residue Ser556 is modified to Phosphoserine.

It belongs to the TORC family. Binding, as a tetramer, through its N-terminal region, with the bZIP domain of creb1 enhances recruitment of taf4 to the promoter. 'Arg-300' in the bZIP domain of creb1 is essential for this interaction.

It localises to the nucleus. The protein resides in the cytoplasm. Its function is as follows. Transcriptional coactivator for creb1 which activates transcription through both consensus and variant cAMP response element (CRE) sites. Acts as a coactivator, in the SIK/TORC signaling pathway, being active when dephosphorylated and acts independently of creb1 'Ser-119' phosphorylation. Enhances the interaction of creb1 with taf4. Regulates the expression of specific CREB-activated genes such as the steroidogenic gene, StAR. Potent coactivator of ppargc1a and inducer of mitochondrial biogenesis in muscle cells. The polypeptide is CREB-regulated transcription coactivator 3 (crtc3) (Xenopus laevis (African clawed frog)).